The following is a 54-amino-acid chain: UPF0391 membrane protein Rmet_0093 (54 aa).

A run of 2 helical transmembrane segments spans residues Ala-5–Ala-25 and Ile-30–Leu-50.

The protein belongs to the UPF0391 family.

It localises to the cell membrane. The chain is UPF0391 membrane protein Rmet_0093 from Cupriavidus metallidurans (strain ATCC 43123 / DSM 2839 / NBRC 102507 / CH34) (Ralstonia metallidurans).